The primary structure comprises 569 residues: 4-coumarate-CoA ligase 2 (569 aa).

Residues 1-24 (MITIAESHPQIHHSPPDTTAPSTP) are disordered. ATP contacts are provided by residues 216–220 (SSGTT), H265, 337–339 (AAP), 359–360 (QG), T364, D448, R463, and K554. The segment at 290 to 359 (EMEGMLETIQ…GRLPQAVLGQ (70 aa)) is SBD1. Residues 360 to 427 (GYGMTEAGPV…VRGPQIMKGY (68 aa)) form an SBD2 region.

Belongs to the ATP-dependent AMP-binding enzyme family. Mostly expressed in stems, and, to a lower extent, in bulbs.

The catalysed reaction is (E)-4-coumarate + ATP + CoA = (E)-4-coumaroyl-CoA + AMP + diphosphate. Its pathway is phytoalexin biosynthesis; 3,4',5-trihydroxystilbene biosynthesis; 3,4',5-trihydroxystilbene from trans-4-coumarate: step 1/2. Produces CoA thioesters of a variety of hydroxy- and methoxy-substituted cinnamic acids, which are used to synthesize several phenylpropanoid-derived compounds, including anthocyanins, flavonoids, isoflavonoids, coumarins, lignin, suberin and wall-bound phenolics. This chain is 4-coumarate-CoA ligase 2, found in Narcissus pseudonarcissus (Daffodil).